Here is a 463-residue protein sequence, read N- to C-terminus: Chromosomal replication initiator protein DnaA (463 aa).

Residues 1–83 (MSTNQIILTD…LQLFQHYNNT (83 aa)) are domain I, interacts with DnaA modulators. The interval 83–124 (TIKSVEIITKELPGTSKTVIELPTKTFADIGSSELNAENIFS) is domain II. The segment at 125-343 (TLDVRFTFDN…GALNKVIAHS (219 aa)) is domain III, AAA+ region. Residues glycine 171, glycine 173, lysine 174, and threonine 175 each contribute to the ATP site. Residues 344–463 (NFTLKEITLE…INLLMKILQN (120 aa)) form a domain IV, binds dsDNA region.

This sequence belongs to the DnaA family. In terms of assembly, oligomerizes as a right-handed, spiral filament on DNA at oriC.

It is found in the cytoplasm. In terms of biological role, plays an essential role in the initiation and regulation of chromosomal replication. ATP-DnaA binds to the origin of replication (oriC) to initiate formation of the DNA replication initiation complex once per cell cycle. Binds the DnaA box (a 9 base pair repeat at the origin) and separates the double-stranded (ds)DNA. Forms a right-handed helical filament on oriC DNA; dsDNA binds to the exterior of the filament while single-stranded (ss)DNA is stabiized in the filament's interior. The ATP-DnaA-oriC complex binds and stabilizes one strand of the AT-rich DNA unwinding element (DUE), permitting loading of DNA polymerase. After initiation quickly degrades to an ADP-DnaA complex that is not apt for DNA replication. Binds acidic phospholipids. This chain is Chromosomal replication initiator protein DnaA, found in Rickettsia canadensis (strain McKiel).